The chain runs to 72 residues: Large ribosomal subunit protein bL31 (72 aa).

The protein belongs to the bacterial ribosomal protein bL31 family. Type A subfamily. Part of the 50S ribosomal subunit.

Its function is as follows. Binds the 23S rRNA. The polypeptide is Large ribosomal subunit protein bL31 (Rhodospirillum rubrum (strain ATCC 11170 / ATH 1.1.1 / DSM 467 / LMG 4362 / NCIMB 8255 / S1)).